The following is a 417-amino-acid chain: Dihydroorotase (417 aa).

Residues histidine 60 and histidine 62 each coordinate Zn(2+). Substrate-binding positions include 62 to 64 (HLR) and asparagine 94. Residues lysine 138, histidine 167, histidine 207, and aspartate 275 each coordinate Zn(2+). Lysine 138 is subject to N6-carboxylysine. Aspartate 275 is a catalytic residue. Substrate is bound by residues histidine 279 and 289–290 (AG).

The protein belongs to the metallo-dependent hydrolases superfamily. DHOase family. Class I DHOase subfamily. Zn(2+) is required as a cofactor.

The enzyme catalyses (S)-dihydroorotate + H2O = N-carbamoyl-L-aspartate + H(+). Its pathway is pyrimidine metabolism; UMP biosynthesis via de novo pathway; (S)-dihydroorotate from bicarbonate: step 3/3. In terms of biological role, catalyzes the reversible cyclization of carbamoyl aspartate to dihydroorotate. This Pyrococcus horikoshii (strain ATCC 700860 / DSM 12428 / JCM 9974 / NBRC 100139 / OT-3) protein is Dihydroorotase.